We begin with the raw amino-acid sequence, 110 residues long: Large ribosomal subunit protein P1 (110 aa).

The tract at residues 87-110 (PAAEEKKEEEKEESDEDMGFGLFD) is disordered.

It belongs to the eukaryotic ribosomal protein P1/P2 family. As to quaternary structure, P1 and P2 exist as dimers at the large ribosomal subunit. In terms of processing, phosphorylated.

In terms of biological role, plays an important role in the elongation step of protein synthesis. This is Large ribosomal subunit protein P1 (ALTA12) from Alternaria alternata (Alternaria rot fungus).